The primary structure comprises 141 residues: Nucleoside diphosphate kinase (141 aa).

The ATP site is built by lysine 11, phenylalanine 59, arginine 87, threonine 93, arginine 104, and asparagine 114. The active-site Pros-phosphohistidine intermediate is histidine 117.

Belongs to the NDK family. Homotetramer. Requires Mg(2+) as cofactor.

The protein resides in the cytoplasm. The enzyme catalyses a 2'-deoxyribonucleoside 5'-diphosphate + ATP = a 2'-deoxyribonucleoside 5'-triphosphate + ADP. The catalysed reaction is a ribonucleoside 5'-diphosphate + ATP = a ribonucleoside 5'-triphosphate + ADP. Functionally, major role in the synthesis of nucleoside triphosphates other than ATP. The ATP gamma phosphate is transferred to the NDP beta phosphate via a ping-pong mechanism, using a phosphorylated active-site intermediate. In Burkholderia mallei (strain NCTC 10247), this protein is Nucleoside diphosphate kinase.